Reading from the N-terminus, the 484-residue chain is Ectonucleoside triphosphate diphosphohydrolase 6 (484 aa).

Topologically, residues Met-1–Arg-39 are cytoplasmic. The helical; Signal-anchor for type II membrane protein transmembrane segment at Val-40–Ile-60 threads the bilayer. Residues Lys-61 to Ser-484 are Lumenal-facing. A glycan (N-linked (GlcNAc...) asparagine) is linked at Asn-220. Glu-224 functions as the Proton acceptor in the catalytic mechanism. Residue Asn-284 is glycosylated (N-linked (GlcNAc...) asparagine). Disulfide bonds link Cys-325–Cys-356 and Cys-416–Cys-430.

It belongs to the GDA1/CD39 NTPase family. Monomer. It depends on Ca(2+) as a cofactor. Mg(2+) is required as a cofactor. In terms of processing, the secreted form may be produced by intracellular processing. Post-translationally, N-glycosylated. In terms of tissue distribution, expressed in most tissues, but predominantly in heart.

The protein resides in the golgi apparatus membrane. It is found in the secreted. The protein localises to the cell membrane. It catalyses the reaction a ribonucleoside 5'-diphosphate + H2O = a ribonucleoside 5'-phosphate + phosphate + H(+). The catalysed reaction is IDP + H2O = IMP + phosphate + H(+). The enzyme catalyses GDP + H2O = GMP + phosphate + H(+). It carries out the reaction UDP + H2O = UMP + phosphate + H(+). Glycosylation does not appear to be required for enzymatic activity. Catalyzes the hydrolysis of nucleoside triphosphates and diphosphates in a calcium- or magnesium-dependent manner. Has a strong preference for nucleoside diphosphates, preferentially hydrolyzes GDP, IDP, and UDP, with slower hydrolysis of CDP, ITP, GTP, CTP, ADP, and UTP and virtually no hydrolysis of ATP. The membrane bound form might support glycosylation reactions in the Golgi apparatus and, when released from cells, might catalyze the hydrolysis of extracellular nucleotides. This is Ectonucleoside triphosphate diphosphohydrolase 6 (ENTPD6) from Homo sapiens (Human).